Consider the following 99-residue polypeptide: Aspartyl/glutamyl-tRNA(Asn/Gln) amidotransferase subunit C (99 aa).

This sequence belongs to the GatC family. In terms of assembly, heterotrimer of A, B and C subunits.

The catalysed reaction is L-glutamyl-tRNA(Gln) + L-glutamine + ATP + H2O = L-glutaminyl-tRNA(Gln) + L-glutamate + ADP + phosphate + H(+). It catalyses the reaction L-aspartyl-tRNA(Asn) + L-glutamine + ATP + H2O = L-asparaginyl-tRNA(Asn) + L-glutamate + ADP + phosphate + 2 H(+). Functionally, allows the formation of correctly charged Asn-tRNA(Asn) or Gln-tRNA(Gln) through the transamidation of misacylated Asp-tRNA(Asn) or Glu-tRNA(Gln) in organisms which lack either or both of asparaginyl-tRNA or glutaminyl-tRNA synthetases. The reaction takes place in the presence of glutamine and ATP through an activated phospho-Asp-tRNA(Asn) or phospho-Glu-tRNA(Gln). This chain is Aspartyl/glutamyl-tRNA(Asn/Gln) amidotransferase subunit C, found in Paraburkholderia phytofirmans (strain DSM 17436 / LMG 22146 / PsJN) (Burkholderia phytofirmans).